The sequence spans 649 residues: Probable cyclic nucleotide-gated ion channel 12 (649 aa).

At 1–43 the chain is on the cytoplasmic side; the sequence is MNHRRSKFARIDSMGVDGKLKSVRGRLKKVYGKMKTLENWRKT. The chain crosses the membrane as a helical span at residues 44–64; it reads VLLACVVALAIDPLFLFIPLI. At 65 to 76 the chain is on the extracellular side; sequence DSQRFCFTFDKT. The chain crosses the membrane as a helical span at residues 77–97; sequence LVAVVCVIRTFIDTFYVIHII. Residues 98–128 lie on the Cytoplasmic side of the membrane; it reads YYLITETIAPRSQASLRGEIVVHSKATLKTR. A helical membrane pass occupies residues 129–149; that stretch reads LLFHFIVDIISVLPIPQVVVL. Residues 150 to 162 are Extracellular-facing; it reads TLIPLSASLVSER. A helical membrane pass occupies residues 163–183; the sequence is ILKWIILSQYVPRIIRMYPLY. The Cytoplasmic segment spans residues 184 to 200; that stretch reads KEVTRAFGTVAESKWAG. A helical transmembrane segment spans residues 201–221; that stretch reads AALNLFLYMLHSYVFGAFWYL. Residues 222-329 lie on the Extracellular side of the membrane; sequence SSIERKSKCW…QNLETSNSAG (108 aa). A helical transmembrane segment spans residues 330 to 350; the sequence is EIFFAIIICVSGLLLFAVLIG. The Cytoplasmic portion of the chain corresponds to 351–649; sequence NVQKYLQSST…ADLEFAKAEA (299 aa). A nucleoside 3',5'-cyclic phosphate is bound by residues 436–559 and Glu507; that span reads LNIM…TFRL. The tract at residues 545–560 is calmodulin-binding; sequence LNVFQRQKLQRTFRLY. The IQ domain maps to 565–594; it reads RSWAAFFIQAAWRKHCKRKLSKTRDNENIP. A disordered region spans residues 618-649; it reads RRKDTADCSSSPDMSPPVPHKPADLEFAKAEA. The segment covering 638-649 has biased composition (basic and acidic residues); sequence KPADLEFAKAEA.

It belongs to the cyclic nucleotide-gated cation channel (TC 1.A.1.5) family. As to quaternary structure, homotetramer or heterotetramer.

Its subcellular location is the cell membrane. Its function is as follows. Probable cyclic nucleotide-gated ion channel. The chain is Probable cyclic nucleotide-gated ion channel 12 (CNGC12) from Arabidopsis thaliana (Mouse-ear cress).